The following is a 402-amino-acid chain: Phosphoglycerate kinase (402 aa).

Residues 24–26, arginine 40, 63–66, arginine 122, and arginine 155 each bind substrate; these read DFN and HFGR. Residues lysine 206, glycine 297, glutamate 328, and 358–361 each bind ATP; that span reads GGDS.

It belongs to the phosphoglycerate kinase family. In terms of assembly, monomer.

The protein resides in the cytoplasm. The catalysed reaction is (2R)-3-phosphoglycerate + ATP = (2R)-3-phospho-glyceroyl phosphate + ADP. It functions in the pathway carbohydrate degradation; glycolysis; pyruvate from D-glyceraldehyde 3-phosphate: step 2/5. This chain is Phosphoglycerate kinase, found in Prochlorococcus marinus (strain AS9601).